A 180-amino-acid chain; its full sequence is NADH-quinone oxidoreductase subunit I (180 aa).

4Fe-4S ferredoxin-type domains follow at residues 50–80 (LTRDPDGEERCVACNLCAVACPVGCISLQKA) and 90–119 (EFFRINFSRCIFCGLCEEACPTTAIQLTPD). 8 residues coordinate [4Fe-4S] cluster: C60, C63, C66, C70, C99, C102, C105, and C109.

This sequence belongs to the complex I 23 kDa subunit family. As to quaternary structure, NDH-1 is composed of 13 different subunits. Subunits NuoA, H, J, K, L, M, N constitute the membrane sector of the complex. Requires [4Fe-4S] cluster as cofactor.

It is found in the cell inner membrane. The enzyme catalyses a quinone + NADH + 5 H(+)(in) = a quinol + NAD(+) + 4 H(+)(out). NDH-1 shuttles electrons from NADH, via FMN and iron-sulfur (Fe-S) centers, to quinones in the respiratory chain. The immediate electron acceptor for the enzyme in this species is believed to be ubiquinone. Couples the redox reaction to proton translocation (for every two electrons transferred, four hydrogen ions are translocated across the cytoplasmic membrane), and thus conserves the redox energy in a proton gradient. This chain is NADH-quinone oxidoreductase subunit I, found in Shigella sonnei (strain Ss046).